Reading from the N-terminus, the 37-residue chain is Large ribosomal subunit protein bL36 (37 aa).

This sequence belongs to the bacterial ribosomal protein bL36 family.

This Dictyoglomus thermophilum (strain ATCC 35947 / DSM 3960 / H-6-12) protein is Large ribosomal subunit protein bL36.